The sequence spans 396 residues: Polygalacturonase (396 aa).

Positions 1-22 (MDLKFKVHFALVLLFLAHFGES) are cleaved as a signal peptide. Asn143, Asn151, Asn174, Asn181, Asn203, and Asn208 each carry an N-linked (GlcNAc...) asparagine glycan. PbH1 repeat units follow at residues 172 to 198 (CKNL…HVSR) and 199 to 220 (SSSV…SVGD). The Proton donor role is filled by Asp213. A disulfide bond links Cys215 and Cys232. The active site involves His236. PbH1 repeat units lie at residues 252–273 (VVGV…RIKT), 282–303 (VNDV…VIDQ), and 316–356 (PSQV…EVGD). N-linked (GlcNAc...) asparagine glycans are attached at residues Asn259 and Asn294. The disordered stretch occupies residues 364–396 (KEGPAKSSCENIKPSLKGKQNPPVCTASAASSS). Cys372 and Cys388 form a disulfide bridge.

Belongs to the glycosyl hydrolase 28 family. Pollen.

The protein localises to the secreted. Its subcellular location is the cell wall. The enzyme catalyses (1,4-alpha-D-galacturonosyl)n+m + H2O = (1,4-alpha-D-galacturonosyl)n + (1,4-alpha-D-galacturonosyl)m.. In terms of biological role, may function in depolymerizing pectin during pollen development, germination, and tube growth. The chain is Polygalacturonase (PG1) from Nicotiana tabacum (Common tobacco).